The primary structure comprises 135 residues: Large ribosomal subunit protein uL16c (135 aa).

This sequence belongs to the universal ribosomal protein uL16 family. As to quaternary structure, part of the 50S ribosomal subunit.

It localises to the plastid. In Epifagus virginiana (Beechdrops), this protein is Large ribosomal subunit protein uL16c.